Here is a 600-residue protein sequence, read N- to C-terminus: Nisin transport ATP-binding protein NisT (600 aa).

Helical transmembrane passes span 34–54, 69–89, 147–167, 168–188, and 260–280; these read AIYLIVLNAITAFVPLASLFI, LINIIIIYFIVQVITTVLGQL, AIIVELSSFISLLSSLFFIGT, WNIGVAILLLIVPVLSLVLFL, and IFLDFILNLINILTIFAMILS. Residues 34 to 317 form the ABC transmembrane type-1 domain; it reads AIYLIVLNAI…MIQNIYIIYN (284 aa). The ABC transporter domain maps to 352 to 592; it reads VKVINLSYVY…CQYYQELYYS (241 aa). An ATP-binding site is contributed by 386-393; sequence GKNGSGKS.

Belongs to the ABC transporter superfamily. Nisin exporter (TC 3.A.1.111.3) family.

Its subcellular location is the cell membrane. Its function is as follows. Probably implicated in the export process of the lantibiotic nisin. In Lactococcus lactis subsp. lactis (Streptococcus lactis), this protein is Nisin transport ATP-binding protein NisT (nisT).